The sequence spans 489 residues: Equilibrative nucleobase transporter 1 (489 aa).

Residues 17-37 (LLECLGFAGVLFGWTSLVFVF) form a helical membrane-spanning segment. Asparagine 56 is a glycosylation site (N-linked (GlcNAc...) asparagine). 4 helical membrane passes run 72–92 (LIFT…GYIF), 102–122 (LIAI…SADS), 123–143 (AVLL…FLIT), and 158–180 (IITM…KLLY). Position 253 is a phosphoserine (serine 253). Position 258 is a phosphothreonine (threonine 258). 6 helical membrane-spanning segments follow: residues 277–297 (FAWH…FIGT), 318–338 (NAFA…GLLM), 358–380 (AAAL…GFAV), 402–422 (SFLY…EHFG), 426–446 (GLVM…FTLI), and 455–475 (LYVN…PFLV).

The protein belongs to the SLC43A transporter (TC 2.A.1.44) family.

The protein resides in the basolateral cell membrane. The enzyme catalyses adenine(out) = adenine(in). The catalysed reaction is guanine(out) = guanine(in). It carries out the reaction hypoxanthine(out) = hypoxanthine(in). Sodium-independent purine-selective nucleobase transporter which mediates the equilibrative transport of extracellular purine nucleobases such as adenine, guanine and hypoxanthine. May regulate fatty acid (FA) transport in adipocytes, acting as a positive regulator of FA efflux and as a negative regulator of FA uptake. The protein is Equilibrative nucleobase transporter 1 (SLC43A3) of Bos taurus (Bovine).